A 217-amino-acid chain; its full sequence is Aminopyrimidine aminohydrolase (217 aa).

A substrate-binding site is contributed by Asp44. The active-site Nucleophile is the Cys135. Tyr139 and Tyr165 together coordinate substrate. The active-site Proton donor is the Glu207.

This sequence belongs to the TenA family. In terms of assembly, homotetramer.

It catalyses the reaction 4-amino-5-aminomethyl-2-methylpyrimidine + H2O = 4-amino-5-hydroxymethyl-2-methylpyrimidine + NH4(+). The protein operates within cofactor biosynthesis; thiamine diphosphate biosynthesis. Its function is as follows. Catalyzes an amino-pyrimidine hydrolysis reaction at the C5' of the pyrimidine moiety of thiamine compounds to give a hydroxymethylpyrimidine (HMP). Displays low activity on 4-amino-5-aminomethyl-2-methylpyrimidine as substrate, indicating that the enzyme may act on a different HMP precursor that may derive from the human stomach food assumption or processing. Is probably involved in thiamine biosynthesis. Does not display thiaminase II activity, as it is unable to hydrolyze thiamine. This is Aminopyrimidine aminohydrolase from Helicobacter pylori (Campylobacter pylori).